The sequence spans 126 residues: Fluoride-specific ion channel FluC 2 (126 aa).

4 helical membrane-spanning segments follow: residues 11-31, 43-63, 69-89, and 93-113; these read IFLIGAGGFLGAICRFSLCEL, VLGSFMLGLIMYDTEYIGFIG, AFGTGFMGAFTTFSTFAVQSF, and FFPALENISVNLFLALVGVFM. 2 residues coordinate Na(+): Gly-76 and Thr-79.

This sequence belongs to the fluoride channel Fluc/FEX (TC 1.A.43) family.

It is found in the cell membrane. The enzyme catalyses fluoride(in) = fluoride(out). Na(+) is not transported, but it plays an essential structural role and its presence is essential for fluoride channel function. In terms of biological role, fluoride-specific ion channel. Important for reducing fluoride concentration in the cell, thus reducing its toxicity. In Methanosarcina barkeri (strain Fusaro / DSM 804), this protein is Fluoride-specific ion channel FluC 2.